A 287-amino-acid chain; its full sequence is Co-chaperone protein DjlA (287 aa).

Over 1–6 the chain is Periplasmic; it reads MNFIGK. Residues 7-30 form a helical membrane-spanning segment; that stretch reads FLGLIIGWKLGGFFGAICGVILGH. The Cytoplasmic portion of the chain corresponds to 31-287; it reads LGDKKLYELG…DLICKTKGWK (257 aa). Residues 221–287 enclose the J domain; that stretch reads DAYKVLGVSA…DLICKTKGWK (67 aa).

As to quaternary structure, homodimer.

It localises to the cell inner membrane. Its function is as follows. Regulatory DnaK co-chaperone. Direct interaction between DnaK and DjlA is needed for the induction of the wcaABCDE operon, involved in the synthesis of a colanic acid polysaccharide capsule, possibly through activation of the RcsB/RcsC phosphotransfer signaling pathway. The colanic acid capsule may help the bacterium survive conditions outside the host. This chain is Co-chaperone protein DjlA, found in Pasteurella multocida (strain Pm70).